The sequence spans 122 residues: Large ribosomal subunit protein uL14 (122 aa).

Belongs to the universal ribosomal protein uL14 family. Part of the 50S ribosomal subunit. Forms a cluster with proteins L3 and L19. In the 70S ribosome, L14 and L19 interact and together make contacts with the 16S rRNA in bridges B5 and B8.

In terms of biological role, binds to 23S rRNA. Forms part of two intersubunit bridges in the 70S ribosome. The sequence is that of Large ribosomal subunit protein uL14 from Novosphingobium aromaticivorans (strain ATCC 700278 / DSM 12444 / CCUG 56034 / CIP 105152 / NBRC 16084 / F199).